The primary structure comprises 355 residues: uncharacterized protein (355 aa).

3 helical membrane passes run 275 to 295 (SLIV…FVAF), 301 to 321 (WNSI…VVGV), and 330 to 350 (IAST…PLAL).

This sequence to M.tuberculosis Rv0497.

It is found in the cell membrane. This is an uncharacterized protein from Mycobacterium leprae (strain TN).